A 616-amino-acid chain; its full sequence is Hemagglutinin-neuraminidase (616 aa).

The Intravirion segment spans residues 1 to 26 (MDRAVSQVALENDEREAKNTWRLVFR). A helical membrane pass occupies residues 27–47 (IAILLSTVVTLAISAAALAYS). Over 48 to 616 (MEASTPSDLV…ELESYAASWP (569 aa)) the chain is Virion surface. The N-linked (GlcNAc...) asparagine; by host glycan is linked to asparagine 119. Residues 124–152 (GAPIHDPDYIGGIGKELIVDDASDVTSYY) are important for interaction with fusion/F protein. 3 disulfides stabilise this stretch: cysteine 172–cysteine 196, cysteine 186–cysteine 247, and cysteine 238–cysteine 251. The interval 234 to 239 (NRKSCS) is involved in neuraminidase activity. 2 N-linked (GlcNAc...) asparagine; by host glycosylation sites follow: asparagine 341 and asparagine 433. Cystine bridges form between cysteine 344–cysteine 461 and cysteine 455–cysteine 465. N-linked (GlcNAc...) asparagine; by host glycosylation is found at asparagine 481, asparagine 538, and asparagine 600. A disulfide bond links cysteine 531 and cysteine 542.

Belongs to the paramyxoviruses hemagglutinin-neuraminidase family. Homotetramer; composed of disulfide-linked homodimers. Interacts with F protein trimer. Interacts with host CG-1B; this interaction inhibits viral adsorption and replication rather than internalization.

It is found in the virion membrane. The protein localises to the host cell membrane. The enzyme catalyses Hydrolysis of alpha-(2-&gt;3)-, alpha-(2-&gt;6)-, alpha-(2-&gt;8)- glycosidic linkages of terminal sialic acid residues in oligosaccharides, glycoproteins, glycolipids, colominic acid and synthetic substrates.. Mediates the viral entry into the host cell together with fusion/F protein. Attaches the virus to sialic acid-containing cell receptors and thereby initiates infection. Binding of HN protein to the receptor induces a conformational change that allows the F protein to trigger virion/cell membranes fusion. Functionally, neuraminidase activity ensures the efficient spread of the virus by dissociating the mature virions from the neuraminic acid containing glycoproteins. This is Hemagglutinin-neuraminidase (HN) from Newcastle disease virus (strain Queensland/66) (NDV).